The sequence spans 130 residues: Small ribosomal subunit protein uS11 (130 aa).

It belongs to the universal ribosomal protein uS11 family. As to quaternary structure, part of the 30S ribosomal subunit. Interacts with proteins S7 and S18. Binds to IF-3.

In terms of biological role, located on the platform of the 30S subunit, it bridges several disparate RNA helices of the 16S rRNA. Forms part of the Shine-Dalgarno cleft in the 70S ribosome. This Latilactobacillus sakei subsp. sakei (strain 23K) (Lactobacillus sakei subsp. sakei) protein is Small ribosomal subunit protein uS11.